Consider the following 63-residue polypeptide: Toxin S6C6 (63 aa).

5 disulfides stabilise this stretch: C3–C24, C6–C11, C17–C39, C43–C55, and C56–C61.

This sequence belongs to the three-finger toxin family. Ancestral subfamily. Orphan group XIX sub-subfamily. In terms of tissue distribution, expressed by the venom gland.

The protein resides in the secreted. May enhance presynaptic acetylcholine release. The chain is Toxin S6C6 from Dendroaspis jamesoni kaimosae (Eastern Jameson's mamba).